The sequence spans 352 residues: Ion-translocating oxidoreductase complex subunit D (352 aa).

The next 5 membrane-spanning stretches (helical) occupy residues 20 to 40, 42 to 62, 78 to 109, 123 to 143, and 148 to 168; these read IMLLVLLAAVPGIAAQLWFFG, GTLVQILLASVSALLAEALVL, ALLTGLLLAVSIPPLAPWWMVVLGTVFAVIIA, PAMIGYVVLLISFPVQMTSWL, and IAVNIPGFIDAIQVIFSGHTA. At T187 the chain carries FMN phosphoryl threonine. Helical transmembrane passes span 214 to 234, 242 to 262, 267 to 287, and 301 to 318; these read ILAGAGWQWVNLAWLAGGVWL, WHIPLSFLVTLALCATLGWLF, LAAPQIHLLSGATMLGAFFIL, and LMFGALAGLLVWLIRSFG.

Belongs to the NqrB/RnfD family. The complex is composed of six subunits: RsxA, RsxB, RsxC, RsxD, RsxE and RsxG. It depends on FMN as a cofactor.

The protein resides in the cell inner membrane. In terms of biological role, part of a membrane-bound complex that couples electron transfer with translocation of ions across the membrane. Required to maintain the reduced state of SoxR. In Shigella flexneri serotype 5b (strain 8401), this protein is Ion-translocating oxidoreductase complex subunit D.